A 344-amino-acid polypeptide reads, in one-letter code: Fructose-1,6-bisphosphatase class 1 (344 aa).

Mg(2+) contacts are provided by Glu90, Asp109, Leu111, and Asp112. Residues Asp112–Ser115 and Asn200 each bind substrate. Residue Glu271 coordinates Mg(2+).

The protein belongs to the FBPase class 1 family. In terms of assembly, homotetramer. Mg(2+) serves as cofactor.

It is found in the cytoplasm. It carries out the reaction beta-D-fructose 1,6-bisphosphate + H2O = beta-D-fructose 6-phosphate + phosphate. Its pathway is carbohydrate biosynthesis; gluconeogenesis. This chain is Fructose-1,6-bisphosphatase class 1, found in Nitrobacter vulgaris.